Consider the following 293-residue polypeptide: MKIRIAARGSKLSRIQVDMLGEKLKKIGIEYEIIDIKTKADLFSTEPLSKLGKGVFEKEVNEAVLEGKADIAVHSMKDILSEINPSLEIFAVLKRDPPYDILIAEKNLDKLDSNITIGTSSIRRKNFLKYIKPEINTKDIRGNVDTRIRKYLSKEYQGLILAEASLKRLNMTMNYHRLNVYDFTPEANQGIIVALGRKKDEKIKEIFKEINHKDTLDEALAERAVISLVGGGCHSPIGVLFKKEGKEFYGIASYSDGKKKITVSISKPGDPYTIGSELGLLLKKEMKNEDIIP.

An S-(dipyrrolylmethanemethyl)cysteine modification is found at C233.

The protein belongs to the HMBS family. It depends on dipyrromethane as a cofactor.

The catalysed reaction is 4 porphobilinogen + H2O = hydroxymethylbilane + 4 NH4(+). It functions in the pathway porphyrin-containing compound metabolism; protoporphyrin-IX biosynthesis; coproporphyrinogen-III from 5-aminolevulinate: step 2/4. Functionally, tetrapolymerization of the monopyrrole PBG into the hydroxymethylbilane pre-uroporphyrinogen in several discrete steps. This chain is Probable porphobilinogen deaminase, found in Saccharolobus islandicus (strain Y.N.15.51 / Yellowstone #2) (Sulfolobus islandicus).